The following is a 384-amino-acid chain: Formate-dependent phosphoribosylglycinamide formyltransferase (384 aa).

Residues 14 to 15 and Glu74 contribute to the N(1)-(5-phospho-beta-D-ribosyl)glycinamide site; that span reads EL. ATP-binding positions include Arg106, Lys147, 152–157, 187–190, and Glu195; these read SSGKGQ and EEFI. Residues 111-300 form the ATP-grasp domain; it reads RLAAETLGLA…EFALHVRAIL (190 aa). Mg(2+) is bound by residues Glu259 and Glu271. N(1)-(5-phospho-beta-D-ribosyl)glycinamide-binding positions include Asp278, Lys348, and 355-356; that span reads RR.

It belongs to the PurK/PurT family. In terms of assembly, homodimer.

It catalyses the reaction N(1)-(5-phospho-beta-D-ribosyl)glycinamide + formate + ATP = N(2)-formyl-N(1)-(5-phospho-beta-D-ribosyl)glycinamide + ADP + phosphate + H(+). It functions in the pathway purine metabolism; IMP biosynthesis via de novo pathway; N(2)-formyl-N(1)-(5-phospho-D-ribosyl)glycinamide from N(1)-(5-phospho-D-ribosyl)glycinamide (formate route): step 1/1. Catalyzes two reactions: the first one is the production of beta-formyl glycinamide ribonucleotide (GAR) from formate, ATP and beta GAR; the second, a side reaction, is the production of acetyl phosphate and ADP from acetate and ATP. In terms of biological role, involved in the de novo purine biosynthesis. Catalyzes the transfer of formate to 5-phospho-ribosyl-glycinamide (GAR), producing 5-phospho-ribosyl-N-formylglycinamide (FGAR). Formate is provided by PurU via hydrolysis of 10-formyl-tetrahydrofolate. The protein is Formate-dependent phosphoribosylglycinamide formyltransferase of Bacillus subtilis (strain 168).